Here is a 179-residue protein sequence, read N- to C-terminus: CASP-like protein 5A2 (179 aa).

Residues 1–24 (MNVSHASVHPVEDPPAAATEVENP) are disordered. The Cytoplasmic portion of the chain corresponds to 1 to 38 (MNVSHASVHPVEDPPAAATEVENPPRVRMDDMEGMPGT). A helical membrane pass occupies residues 39-59 (LLGLALRFFQFLFAAAALCVM). Over 60-70 (ASTSDFPSVTA) the chain is Extracellular. A helical membrane pass occupies residues 71–91 (FCYLVAATGLQSLWSLALAMV). The Cytoplasmic portion of the chain corresponds to 92-115 (DVYAIMVKRSLQNRRLVSLFAIGD). Residues 116–136 (GVTSTLTFAAACASAGITVLI) traverse the membrane as a helical segment. The Extracellular segment spans residues 137-155 (DNDLNSCAQNHCVQFETST). Residues 156–176 (ALAFISWFAALPSFLFNFWSL) traverse the membrane as a helical segment. Residues 177-179 (ASR) are Cytoplasmic-facing.

Belongs to the Casparian strip membrane proteins (CASP) family. As to quaternary structure, homodimer and heterodimers.

The protein resides in the cell membrane. This is CASP-like protein 5A2 from Arabidopsis thaliana (Mouse-ear cress).